Consider the following 212-residue polypeptide: Glycerol-3-phosphate acyltransferase (212 aa).

5 consecutive transmembrane segments (helical) span residues 3-23 (ILLA…VIVS), 51-71 (KAAI…VWLA), 78-98 (DVAV…PVFF), 115-135 (AVHP…AFFF), and 139-159 (SLAA…LFGT).

The protein belongs to the PlsY family. Probably interacts with PlsX.

Its subcellular location is the cell inner membrane. The enzyme catalyses an acyl phosphate + sn-glycerol 3-phosphate = a 1-acyl-sn-glycero-3-phosphate + phosphate. The protein operates within lipid metabolism; phospholipid metabolism. Catalyzes the transfer of an acyl group from acyl-phosphate (acyl-PO(4)) to glycerol-3-phosphate (G3P) to form lysophosphatidic acid (LPA). This enzyme utilizes acyl-phosphate as fatty acyl donor, but not acyl-CoA or acyl-ACP. This is Glycerol-3-phosphate acyltransferase from Burkholderia vietnamiensis (strain G4 / LMG 22486) (Burkholderia cepacia (strain R1808)).